The sequence spans 379 residues: MTNTRKNHPLLKIINNSLIDLPTPPNISSLWNFGSLLGACLTIQIITGLFLAMHYTADTMTAFSSVAHICRDVNYGWTIRYLHANGASMFFLCLFIHVGRGLYYGSFTLLETWNVGITLLFSVMATAFMGYVLPWGQMSFWGATVITNLLSAIPYVGTDLVEWIWGGFSVGKATLTRFFALHFILPFITSALVMIHLLFLHETGSNNPLGVPSNSDKIPFHPYYTTKDFLGLLLLILLLMTMALFYPDLLGDPDNYTPANPLNTPPHIKPEWYFLFAYAILRSIPNKLGGVMALILSILILVMFPFLQPNKQQTMMFRPLSQFLFWILVADLLTLTWIGGQPVEDPFINIGQMASMLYFSLMIFIMPTTCFIENKMLKW.

Transmembrane regions (helical) follow at residues Phe-33 to Met-53, Trp-77 to Val-98, Trp-113 to Leu-133, and Phe-178 to Leu-198. 2 residues coordinate heme b: His-83 and His-97. 2 residues coordinate heme b: His-182 and His-196. His-201 is a binding site for a ubiquinone. Helical transmembrane passes span Thr-226–Tyr-246, Leu-288–Gln-308, Leu-320–Gly-340, and Phe-347–Pro-367.

This sequence belongs to the cytochrome b family. As to quaternary structure, the cytochrome bc1 complex contains 11 subunits: 3 respiratory subunits (MT-CYB, CYC1 and UQCRFS1), 2 core proteins (UQCRC1 and UQCRC2) and 6 low-molecular weight proteins (UQCRH/QCR6, UQCRB/QCR7, UQCRQ/QCR8, UQCR10/QCR9, UQCR11/QCR10 and a cleavage product of UQCRFS1). This cytochrome bc1 complex then forms a dimer. It depends on heme b as a cofactor.

It localises to the mitochondrion inner membrane. Functionally, component of the ubiquinol-cytochrome c reductase complex (complex III or cytochrome b-c1 complex) that is part of the mitochondrial respiratory chain. The b-c1 complex mediates electron transfer from ubiquinol to cytochrome c. Contributes to the generation of a proton gradient across the mitochondrial membrane that is then used for ATP synthesis. This is Cytochrome b (MT-CYB) from Lepilemur sahamalazensis (Sahamalaza sportive lemur).